The chain runs to 202 residues: FMN-dependent NADH:quinone oxidoreductase (202 aa).

FMN contacts are provided by residues Ser12 and 21-23 (SFS).

It belongs to the azoreductase type 1 family. Homodimer. FMN is required as a cofactor.

It catalyses the reaction 2 a quinone + NADH + H(+) = 2 a 1,4-benzosemiquinone + NAD(+). The catalysed reaction is N,N-dimethyl-1,4-phenylenediamine + anthranilate + 2 NAD(+) = 2-(4-dimethylaminophenyl)diazenylbenzoate + 2 NADH + 2 H(+). Its function is as follows. Quinone reductase that provides resistance to thiol-specific stress caused by electrophilic quinones. Also exhibits azoreductase activity. Catalyzes the reductive cleavage of the azo bond in aromatic azo compounds to the corresponding amines. In Mycoplasma mobile (strain ATCC 43663 / 163K / NCTC 11711) (Mesomycoplasma mobile), this protein is FMN-dependent NADH:quinone oxidoreductase.